A 47-amino-acid polypeptide reads, in one-letter code: Large ribosomal subunit protein bL34 (47 aa).

Belongs to the bacterial ribosomal protein bL34 family.

This is Large ribosomal subunit protein bL34 from Mycobacterium avium (strain 104).